The chain runs to 349 residues: Twinfilin-2-A (349 aa).

ADF-H domains follow at residues 4 to 139 (QTGI…KHVS) and 177 to 313 (GLSF…DEVH). The disordered stretch occupies residues 321 to 349 (QAFAKPKGPAGKRGQKRLIKGPGENGEDS).

This sequence belongs to the actin-binding proteins ADF family. Twinfilin subfamily. In terms of assembly, interacts with G-actin; ADP-actin form and capping protein (CP).

The protein resides in the cytoplasm. The protein localises to the cytoskeleton. Its subcellular location is the perinuclear region. In terms of biological role, actin-binding protein involved in motile and morphological processes. Inhibits actin polymerization, likely by sequestering G-actin. This Xenopus laevis (African clawed frog) protein is Twinfilin-2-A (twf2-a).